The sequence spans 136 residues: Histone H3 (136 aa).

A disordered region spans residues 1–45 (MARTKQTARKSTGGKAPRKQLATKAARKSAPATGGVKKPHRYRPG). K5 carries the N6,N6,N6-trimethyllysine; alternate modification. N6,N6-dimethyllysine; alternate is present on K5. Residues K5 and K10 each carry the N6-methyllysine; alternate modification. K10 carries the N6-acetyllysine; alternate modification. Residue S11 is modified to Phosphoserine. An N6,N6-dimethyllysine; alternate modification is found at K15. An N6-methyllysine; alternate mark is found at K15, K19, K24, K28, and K37. N6-acetyllysine; alternate is present on residues K15, K19, K24, K28, and K37. 2 positions are modified to N6,N6,N6-trimethyllysine; alternate: K28 and K37. K28 and K37 each carry N6,N6-dimethyllysine; alternate. K57 and K65 each carry N6-acetyllysine. Position 80 is an N6,N6,N6-trimethyllysine; alternate (K80). At K80 the chain carries N6,N6-dimethyllysine; alternate. N6-methyllysine; alternate is present on K80.

The protein belongs to the histone H3 family. As to quaternary structure, the nucleosome is a histone octamer containing two molecules each of H2A, H2B, H3 and H4 assembled in one H3-H4 heterotetramer and two H2A-H2B heterodimers. The octamer wraps approximately 147 bp of DNA. Post-translationally, phosphorylated to form H3S10ph. H3S10ph promotes subsequent H3K14ac formation and is required for transcriptional activation through TBP recruitment to the promoters. In terms of processing, mono-, di- and trimethylated by the COMPASS complex to form H3K4me1/2/3. H3K4me activates gene expression by regulating transcription elongation and plays a role in telomere length maintenance. H3K4me enrichment correlates with transcription levels, and occurs in a 5' to 3' gradient with H3K4me3 enrichment at the 5'-end of genes, shifting to H3K4me2 and then H3K4me1. Methylated by SET2 to form H3K36me. H3K36me represses gene expression. Methylated by DOT1 to form H3K79me. H3K79me is required for association of SIR proteins with telomeric regions and for telomeric silencing. The COMPASS-mediated formation of H3K4me2/3 and the DOT1-mediated formation of H3K79me require H2BK123ub1. Acetylation of histone H3 leads to transcriptional activation. H3K14ac formation by GCN5 is promoted by H3S10ph. H3K14ac can also be formed by ESA1. H3K56ac formation occurs predominantly in newly synthesized H3 molecules during G1, S and G2/M of the cell cycle and may be involved in DNA repair.

It localises to the nucleus. Its subcellular location is the chromosome. Core component of nucleosome. Nucleosomes wrap and compact DNA into chromatin, limiting DNA accessibility to the cellular machineries which require DNA as a template. Histones thereby play a central role in transcription regulation, DNA repair, DNA replication and chromosomal stability. DNA accessibility is regulated via a complex set of post-translational modifications of histones, also called histone code, and nucleosome remodeling. The polypeptide is Histone H3 (H3.1) (Mortierella alpina (Oleaginous fungus)).